A 250-amino-acid chain; its full sequence is Peptidyl-tRNA hydrolase (250 aa).

Residue Tyr-14 participates in tRNA binding. The Proton acceptor role is filled by His-19. TRNA-binding residues include Phe-64, Asn-66, and Asn-112. The disordered stretch occupies residues 192 to 250 (MGDGNQRPGGVKTDPAQLEKAPPKAQSHIRQARQNQKKPNIPESGPMAEMLKKLLGKKD). Residues 219–229 (HIRQARQNQKK) show a composition bias toward polar residues. Over residues 241–250 (MLKKLLGKKD) the composition is skewed to basic and acidic residues.

This sequence belongs to the PTH family. Monomer.

Its subcellular location is the cytoplasm. The enzyme catalyses an N-acyl-L-alpha-aminoacyl-tRNA + H2O = an N-acyl-L-amino acid + a tRNA + H(+). In terms of biological role, hydrolyzes ribosome-free peptidyl-tRNAs (with 1 or more amino acids incorporated), which drop off the ribosome during protein synthesis, or as a result of ribosome stalling. Its function is as follows. Catalyzes the release of premature peptidyl moieties from peptidyl-tRNA molecules trapped in stalled 50S ribosomal subunits, and thus maintains levels of free tRNAs and 50S ribosomes. This chain is Peptidyl-tRNA hydrolase, found in Brucella suis (strain ATCC 23445 / NCTC 10510).